A 64-amino-acid chain; its full sequence is Antimicrobial peptide 1 (64 aa).

A signal peptide spans 1-26; it reads MAKVSSSLLKFAIVLILVLSMSAIIS. 3 cysteine pairs are disulfide-bonded: cysteine 29-cysteine 46, cysteine 36-cysteine 50, and cysteine 45-cysteine 61.

The protein belongs to the AMP family.

It localises to the secreted. Its function is as follows. Possesses antifungal and antibacterial activity. In Mesembryanthemum crystallinum (Common ice plant), this protein is Antimicrobial peptide 1.